The primary structure comprises 818 residues: IQ and AAA domain-containing protein 1-like (818 aa).

Residues 206–235 (QGQAAVTIQKVWKGYLQRKRTQQDRRMEME) enclose the IQ domain. Disordered stretches follow at residues 344-377 (QMQE…AKKG) and 458-482 (EERP…KDLT). Residues 463-476 (RAPKKTPGKKTGKK) are compositionally biased toward basic residues. 567-574 (GPSGMGKK) lines the ATP pocket. The disordered stretch occupies residues 795–818 (SMKHRMDQLEAEEAKLDKEKKKRK). The span at 798-818 (HRMDQLEAEEAKLDKEKKKRK) shows a compositional bias: basic and acidic residues.

This sequence belongs to the AAA ATPase family.

This Homo sapiens (Human) protein is IQ and AAA domain-containing protein 1-like (IQCA1L).